A 122-amino-acid chain; its full sequence is Large ribosomal subunit protein uL14 (122 aa).

It belongs to the universal ribosomal protein uL14 family. Part of the 50S ribosomal subunit. Forms a cluster with proteins L3 and L19. In the 70S ribosome, L14 and L19 interact and together make contacts with the 16S rRNA in bridges B5 and B8.

Functionally, binds to 23S rRNA. Forms part of two intersubunit bridges in the 70S ribosome. The polypeptide is Large ribosomal subunit protein uL14 (Latilactobacillus sakei subsp. sakei (strain 23K) (Lactobacillus sakei subsp. sakei)).